Reading from the N-terminus, the 440-residue chain is Cell division protein FtsA (440 aa).

It belongs to the FtsA/MreB family. Self-interacts. Interacts with FtsZ.

The protein localises to the cell membrane. Cell division protein that is involved in the assembly of the Z ring. May serve as a membrane anchor for the Z ring. The chain is Cell division protein FtsA from Enterococcus faecalis (strain ATCC 700802 / V583).